We begin with the raw amino-acid sequence, 595 residues long: Pyranose dehydrogenase (595 aa).

The first 21 residues, 1–21, serve as a signal peptide directing secretion; it reads MARFNARLFSIAILGFQVARS. Residues Asn-95 and Asn-110 are each glycosylated (N-linked (GlcNAc...) asparagine). His-123 carries the tele-8alpha-FAD histidine modification. Asn-195, Asn-337, Asn-367, Asn-502, and Asn-510 each carry an N-linked (GlcNAc...) asparagine glycan. His-530 functions as the Proton acceptor in the catalytic mechanism. An N-linked (GlcNAc...) asparagine glycan is attached at Asn-541. Residue His-574 is part of the active site.

The protein belongs to the GMC oxidoreductase family. As to quaternary structure, monomer. The cofactor is FAD. N-glycosylated.

It localises to the secreted. It carries out the reaction pyranose + acceptor = pyranos-2-ulose + reduced acceptor.. The enzyme catalyses pyranose + acceptor = pyranos-3-ulose + reduced acceptor.. The catalysed reaction is pyranose + acceptor = pyranos-2,3-diulose + reduced acceptor.. It catalyses the reaction a pyranoside + acceptor = a pyranosid-3-ulose + reduced acceptor.. It carries out the reaction a pyranoside + acceptor = a pyranosid-3,4-diulose + reduced acceptor.. In terms of biological role, catalyzes the single-oxidation or sequential double oxidation reaction of carbohydrates primarily at carbon-2 and/or carbon-3 with the concomitant reduction of the flavin. The enzyme exhibits a broad sugar substrate specificity, oxidizing different aldopyranoses to the corresponding C-1, C-2, C-3 or C-1,2, C-2,3 and C-3,4 (di)dehydro sugars with substrate-specific regioselectivity. Accepts only a narrow range of electron acceptors such as substituted benzoquinones and complexed metal ions and reacts extremely slowly with O(2) as acceptor. May play a role in the natural recycling of plant matter by oxidizing all major monosaccharides in lignocellulose and by reducing quinone compounds or reactive radical species generated during lignin depolymerization. This is Pyranose dehydrogenase from Agaricus campestris (Field mushroom).